The following is a 342-amino-acid chain: Muscleblind-like protein 3 (342 aa).

4 C3H1-type zinc fingers span residues 14-42 (WLTLEVCREFQRGTCSRADAECRFAHPPR), 48-74 (NGRVVACFDSLKGRCTRENCKYLHPPP), 174-202 (TDRLEVCREFQRGNCTRGESECRYAHPTD), and 210-236 (DNSVTICMDYIKGRCSREKCKYFHPPP). Residues 316 to 326 (PSTVSTATPPA) are compositionally biased toward low complexity. The tract at residues 316-342 (PSTVSTATPPASNVPYVPTTTGNQLKY) is disordered. The segment covering 333-342 (PTTTGNQLKY) has biased composition (polar residues).

The protein belongs to the muscleblind family.

It is found in the nucleus. Its subcellular location is the cytoplasm. Functionally, mediates pre-mRNA alternative splicing regulation. Acts either as activator or repressor of splicing on specific pre-mRNA targets. Inhibits cardiac troponin-T (TNNT2) pre-mRNA exon inclusion but induces insulin receptor (IR) pre-mRNA exon inclusion in muscle. Antagonizes the alternative splicing activity pattern of CELF proteins. Could inhibit terminal muscle differentiation, acting at approximately the time of myogenin induction. This Mus musculus (Mouse) protein is Muscleblind-like protein 3 (Mbnl3).